The chain runs to 404 residues: Diaminopropionate ammonia-lyase (404 aa).

N6-(pyridoxal phosphate)lysine is present on Lys78.

The protein belongs to the diaminopropionate ammonia-lyase family. In terms of assembly, homodimer. It depends on pyridoxal 5'-phosphate as a cofactor.

It carries out the reaction (S)-2,3-diaminopropanoate + H2O + H(+) = pyruvate + 2 NH4(+). It catalyses the reaction (R)-2,3-diaminopropanoate + H2O + H(+) = pyruvate + 2 NH4(+). Its activity is regulated as follows. Competitively inhibited by L- and D-alanine. In terms of biological role, catalyzes the alpha,beta-elimination reaction of both L- and D-alpha,beta-diaminopropionate (DAP) to form pyruvate and ammonia. In vitro L- and D-isomers of serine are also degraded, though slowly; it is the only serine dehydratase which can eliminate an amino group at the beta-carbon position. In vivo L-, D- and a mixure of DL-DAP allow growth. DL-DAP is toxic in the absence of this enzyme, it may inhibit enzymes involved in the synthesis of pyruvate and aspartate, as well as amino acids derived from them. This chain is Diaminopropionate ammonia-lyase (dpaL), found in Salmonella typhimurium (strain LT2 / SGSC1412 / ATCC 700720).